We begin with the raw amino-acid sequence, 669 residues long: p135Gag-Myb-Ets-transforming protein (669 aa).

The segment covering 1–10 (NSTMRRKVEQ) has biased composition (basic and acidic residues). Disordered regions lie at residues 1 to 27 (NSTMRRKVEQEGYLQESSKAGLPSATT) and 132 to 153 (TQNHTANYPGWHSTTVADNTMT). The tract at residues 90 to 142 (PAAAAIQRHYNDEDPEKEKRIKELELLLMSTENELKGQQALPTQNHTANYPGW) is transcriptional activation domain. The region spanning 276–361 (ATFSGFAKEQ…EHLEILQKEE (86 aa)) is the PNT domain. A DNA-binding region (ETS) is located at residues 556–640 (GSGPIQLWQF…AGKRYVYRFV (85 aa)).

The protein resides in the host nucleus. Functionally, DNA-binding protein that specifically recognizes the sequence 5'-YAAC[GT]G-3'. The Myb-Ets protein induces predominantly erythroblastosis in chicken and transforms avian erythroblasts and immature myelomonocytic cells in culture. It appears that the Ets domain is responsible for the effects on erythroid cells and that the Myb domain encodes the myeloid-transforming capacity. The polypeptide is p135Gag-Myb-Ets-transforming protein (GAG) (Avian leukemia virus E26).